Reading from the N-terminus, the 142-residue chain is MKTFVAKPETVKRDWYVVDATGKTLGRLATELARRLRGKHKAEYTPHVDTGDYIVVINAEKVAVTGNKETDKLYYWHTGYVGGIKQATFKEMIARRPEAVIEIAVKGMLPKGPLGRAMFRKLKVYAGSEHNHAAQQPQVLDI.

The protein belongs to the universal ribosomal protein uL13 family. In terms of assembly, part of the 50S ribosomal subunit.

This protein is one of the early assembly proteins of the 50S ribosomal subunit, although it is not seen to bind rRNA by itself. It is important during the early stages of 50S assembly. In Histophilus somni (strain 129Pt) (Haemophilus somnus), this protein is Large ribosomal subunit protein uL13.